The sequence spans 168 residues: T-cell surface glycoprotein CD3 delta chain (168 aa).

Positions 1–21 are cleaved as a signal peptide; that stretch reads MEHSRFLSCLILAALLSQVNP. Topologically, residues 22–102 are extracellular; that stretch reads RILKVLEPED…CVELDTATLA (81 aa). C37 and C74 are disulfide-bonded. Residues N38 and N56 are each glycosylated (N-linked (GlcNAc...) asparagine). A helical transmembrane segment spans residues 103–123; the sequence is GMIITDIIATVLLALGVYCFA. Topologically, residues 124–168 are cytoplasmic; the sequence is GHETGRFSRAADTQALMGNDQLYQPLRERNDAQYSRLGDKWARNK. In terms of domain architecture, ITAM spans 135 to 163; sequence DTQALMGNDQLYQPLRERNDAQYSRLGDK. Phosphotyrosine is present on residues Y146 and Y157.

As to quaternary structure, the TCR-CD3 complex is composed of a CD3D/CD3E and a CD3G/CD3E heterodimers that preferentially associate with TCRalpha and TCRbeta, respectively, to form TCRalpha/CD3E/CD3G and TCRbeta/CD3G/CD3E trimers. In turn, the hexamer interacts with CD3Z homodimer to form the TCR-CD3 complex. Alternatively, TCRalpha and TCRbeta can be replaced by TCRgamma and TCRdelta. Interacts with coreceptors CD4 and CD8. In terms of processing, phosphorylated on Tyr residues after T-cell receptor triggering by LCK in association with CD4/CD8. In terms of tissue distribution, CD3D is mostly present on T-lymphocytes with its TCR-CD3 partners. Present also in fetal NK-cells.

The protein localises to the cell membrane. In terms of biological role, part of the TCR-CD3 complex present on T-lymphocyte cell surface that plays an essential role in adaptive immune response. When antigen presenting cells (APCs) activate T-cell receptor (TCR), TCR-mediated signals are transmitted across the cell membrane by the CD3 chains CD3D, CD3E, CD3G and CD3Z. All CD3 chains contain immunoreceptor tyrosine-based activation motifs (ITAMs) in their cytoplasmic domain. Upon TCR engagement, these motifs become phosphorylated by Src family protein tyrosine kinases LCK and FYN, resulting in the activation of downstream signaling pathways. In addition of this role of signal transduction in T-cell activation, CD3D plays an essential role in thymocyte differentiation. Indeed, participates in correct intracellular TCR-CD3 complex assembly and surface expression. In absence of a functional TCR-CD3 complex, thymocytes are unable to differentiate properly. Interacts with CD4 and CD8 and thus serves to establish a functional link between the TCR and coreceptors CD4 and CD8, which is needed for activation and positive selection of CD4 or CD8 T-cells. The sequence is that of T-cell surface glycoprotein CD3 delta chain (CD3D) from Bos taurus (Bovine).